Consider the following 369-residue polypeptide: tRNA/tmRNA (uracil-C(5))-methyltransferase (369 aa).

S-adenosyl-L-methionine-binding residues include glutamine 193, tyrosine 221, asparagine 226, glutamate 242, and aspartate 302. Cysteine 327 (nucleophile) is an active-site residue. The active-site Proton acceptor is the glutamate 361.

This sequence belongs to the class I-like SAM-binding methyltransferase superfamily. RNA M5U methyltransferase family. TrmA subfamily.

The enzyme catalyses uridine(54) in tRNA + S-adenosyl-L-methionine = 5-methyluridine(54) in tRNA + S-adenosyl-L-homocysteine + H(+). The catalysed reaction is uridine(341) in tmRNA + S-adenosyl-L-methionine = 5-methyluridine(341) in tmRNA + S-adenosyl-L-homocysteine + H(+). Dual-specificity methyltransferase that catalyzes the formation of 5-methyluridine at position 54 (m5U54) in all tRNAs, and that of position 341 (m5U341) in tmRNA (transfer-mRNA). This Actinobacillus succinogenes (strain ATCC 55618 / DSM 22257 / CCUG 43843 / 130Z) protein is tRNA/tmRNA (uracil-C(5))-methyltransferase.